A 117-amino-acid chain; its full sequence is Glycoprotein hormones alpha chain (117 aa).

The signal sequence occupies residues 1 to 23; the sequence is MGSVKSAGLSLLLLSFLLYVADS. 5 disulfides stabilise this stretch: Cys34/Cys57, Cys37/Cys86, Cys54/Cys107, Cys58/Cys109, and Cys85/Cys112. 2 N-linked (GlcNAc...) asparagine glycosylation sites follow: Asn78 and Asn103.

The protein belongs to the glycoprotein hormones subunit alpha family. As to quaternary structure, heterodimer. Glycoprotein hormones are heterodimers composed of a common alpha chain described here and a unique beta chain which confers their biological specificity to the different hormones.

The protein resides in the secreted. Functionally, shared alpha chain of heterodimeric glycoprotein hormones. These hormones bind specific receptors on target cells that in turn activate downstream signaling pathways. Involved in gametogenesis and steroidogenesis. The polypeptide is Glycoprotein hormones alpha chain (cga) (Acanthopagrus latus (Yellowfin seabream)).